The following is a 298-amino-acid chain: MYHIISIRDFERSDLDYLLDRAQEFDTGKYRPGMLDDKLVALLFFEPSTRTRMSFATAMARLGGRSISVDSVEASSIVKGETLADTIRVVSGYADAIVLRHPKEGAARLASEFATVPVINAGDGAGQHPSQTLLDLYTIRQSMPVDGIDVGLLGDLRYGRTAHSLALALSLYGVTLHTIAPVGLEMPANIALELRERGMEVVEHPNVEEAIRELDVLYVTRIQRERFPDSASYYNVASSYRITTDLLDGVKERLMILHPLPRAGEIDPAVDRTPYARYFEQARNGVPIRMALLHEVMK.

Residues Arg50 and Thr51 each contribute to the carbamoyl phosphate site. Lys79 is a binding site for L-aspartate. 3 residues coordinate carbamoyl phosphate: Arg100, His128, and Gln131. Arg160 and Arg221 together coordinate L-aspartate. The carbamoyl phosphate site is built by Leu260 and Pro261.

Belongs to the aspartate/ornithine carbamoyltransferase superfamily. ATCase family. As to quaternary structure, heterooligomer of catalytic and regulatory chains.

The catalysed reaction is carbamoyl phosphate + L-aspartate = N-carbamoyl-L-aspartate + phosphate + H(+). Its pathway is pyrimidine metabolism; UMP biosynthesis via de novo pathway; (S)-dihydroorotate from bicarbonate: step 2/3. Catalyzes the condensation of carbamoyl phosphate and aspartate to form carbamoyl aspartate and inorganic phosphate, the committed step in the de novo pyrimidine nucleotide biosynthesis pathway. This is Aspartate carbamoyltransferase catalytic subunit from Methanoculleus marisnigri (strain ATCC 35101 / DSM 1498 / JR1).